A 473-amino-acid polypeptide reads, in one-letter code: Notchless protein homolog (473 aa).

Residues 9–91 (GKTVMCLLTD…VLTIVYQQQA (83 aa)) are ubiquitin-like (UBL) domain. WD repeat units follow at residues 107-146 (GHAE…PLFT), 149-188 (GHKN…LEGS), 192-236 (GHKK…SIIC), 239-277 (GHTL…LIRE), 313-354 (EKQK…QPKK), 358-399 (GHQQ…TVFR), 400-439 (GHVG…LKQD), and 442-473 (GHAD…LWKG). A DWD box motif is present at residues 417-432 (LLSGSKDSTLKIWEIR).

It belongs to the NLE1/RSA4 family. Associates with the pre-60S ribosomal particle. Constitutively and ubiquitously expressed.

It localises to the nucleus. The protein localises to the nucleolus. In terms of biological role, required for female gametophyte development. In Arabidopsis thaliana (Mouse-ear cress), this protein is Notchless protein homolog.